A 386-amino-acid polypeptide reads, in one-letter code: Glucose-1-phosphate adenylyltransferase (386 aa).

Residues tyrosine 100, glycine 165, 180-181 (EK), and serine 191 contribute to the alpha-D-glucose 1-phosphate site.

The protein belongs to the bacterial/plant glucose-1-phosphate adenylyltransferase family. In terms of assembly, homotetramer.

It catalyses the reaction alpha-D-glucose 1-phosphate + ATP + H(+) = ADP-alpha-D-glucose + diphosphate. It participates in glycan biosynthesis; glycogen biosynthesis. Its function is as follows. Involved in the biosynthesis of ADP-glucose, a building block required for the elongation reactions to produce glycogen. Catalyzes the reaction between ATP and alpha-D-glucose 1-phosphate (G1P) to produce pyrophosphate and ADP-Glc. In Clostridium botulinum (strain Alaska E43 / Type E3), this protein is Glucose-1-phosphate adenylyltransferase.